Here is a 678-residue protein sequence, read N- to C-terminus: Transcriptional regulator CRZ1 (678 aa).

The span at 1 to 21 (MSFSNGNMASYMTSSNGEEQS) shows a compositional bias: polar residues. 2 disordered regions span residues 1–50 (MSFS…SHTF) and 159–195 (TPADNQHRPSLTNQFLSPRSNYDGTTRSSGIDSNYSD). Positions 34–47 (YRRNNFRNSSNSGS) are enriched in low complexity. Polar residues predominate over residues 166-195 (RPSLTNQFLSPRSNYDGTTRSSGIDSNYSD). Thr-170 is subject to Phosphothreonine. Residues Ser-175, Ser-245, and Ser-385 each carry the phosphoserine modification. The segment at 401–486 (KLKKSRRRSS…SNFNEDNNNN (86 aa)) is disordered. Low complexity predominate over residues 410–428 (SQTSNNSFTSRRSSRSRSI). 2 stretches are compositionally biased toward basic and acidic residues: residues 429–446 (SPDEKAKSISANREKLLE) and 457–467 (DNNRERYDNDS). Residues 472 to 486 (NTINSSNFNEDNNNN) are compositionally biased toward low complexity. 2 consecutive C2H2-type zinc fingers follow at residues 569–591 (FACDVCGKKFTRPYNLKSHLRTH) and 597–619 (FICSICGKAFARQHDRKRHEDLH).

Post-translationally, phosphorylated. Dephosphorylated by calcineurin which leads to rapid translocation from the cytoplasm to the nucleus. Phosphorylated by the cyclin-CDK PHO80-PHO85.

Its subcellular location is the nucleus. The protein localises to the cytoplasm. Its function is as follows. Involved in the regulation of calcium ion homeostasis. Binds to the calcineurin-dependent response element. Transcriptionally regulates PMC1, PMR1, PMR2A and FKS2. The chain is Transcriptional regulator CRZ1 (CRZ1) from Saccharomyces cerevisiae (strain ATCC 204508 / S288c) (Baker's yeast).